Reading from the N-terminus, the 335-residue chain is tRNA N6-adenosine threonylcarbamoyltransferase (335 aa).

Residues His-110 and His-114 each coordinate Fe cation. Residues 132–136 (LVSGG), Asp-165, Gly-178, and Asn-271 each bind substrate. Asp-299 provides a ligand contact to Fe cation.

Belongs to the KAE1 / TsaD family. Fe(2+) is required as a cofactor.

The protein resides in the cytoplasm. It catalyses the reaction L-threonylcarbamoyladenylate + adenosine(37) in tRNA = N(6)-L-threonylcarbamoyladenosine(37) in tRNA + AMP + H(+). Its function is as follows. Required for the formation of a threonylcarbamoyl group on adenosine at position 37 (t(6)A37) in tRNAs that read codons beginning with adenine. Is involved in the transfer of the threonylcarbamoyl moiety of threonylcarbamoyl-AMP (TC-AMP) to the N6 group of A37, together with TsaE and TsaB. TsaD likely plays a direct catalytic role in this reaction. This Campylobacter jejuni subsp. jejuni serotype O:23/36 (strain 81-176) protein is tRNA N6-adenosine threonylcarbamoyltransferase.